The primary structure comprises 296 residues: Bifunctional protein FolD (296 aa).

Residues 166–168, Ser195, and Ile236 each bind NADP(+); that span reads GRS.

Belongs to the tetrahydrofolate dehydrogenase/cyclohydrolase family. As to quaternary structure, homodimer.

It catalyses the reaction (6R)-5,10-methylene-5,6,7,8-tetrahydrofolate + NADP(+) = (6R)-5,10-methenyltetrahydrofolate + NADPH. The catalysed reaction is (6R)-5,10-methenyltetrahydrofolate + H2O = (6R)-10-formyltetrahydrofolate + H(+). Its pathway is one-carbon metabolism; tetrahydrofolate interconversion. Catalyzes the oxidation of 5,10-methylenetetrahydrofolate to 5,10-methenyltetrahydrofolate and then the hydrolysis of 5,10-methenyltetrahydrofolate to 10-formyltetrahydrofolate. The chain is Bifunctional protein FolD from Chlorobium limicola (strain DSM 245 / NBRC 103803 / 6330).